The sequence spans 689 residues: Glycine--tRNA ligase beta subunit (689 aa).

Belongs to the class-II aminoacyl-tRNA synthetase family. As to quaternary structure, tetramer of two alpha and two beta subunits.

The protein resides in the cytoplasm. The catalysed reaction is tRNA(Gly) + glycine + ATP = glycyl-tRNA(Gly) + AMP + diphosphate. The polypeptide is Glycine--tRNA ligase beta subunit (Pectobacterium carotovorum subsp. carotovorum (strain PC1)).